An 883-amino-acid chain; its full sequence is Aryl hydrocarbon receptor (883 aa).

Residues 1–9 (MSSGANITY) constitute a propeptide that is removed on maturation. The disordered stretch occupies residues 1–38 (MSSGANITYASRKRRKPVQKTVKPIPAEGIKSNPSKRH). Short sequence motifs (nuclear localization signal) lie at residues 12–15 (RKRR) and 36–41 (KRHRDR). A bHLH domain is found at 26–79 (PAEGIKSNPSKRHRDRLNTELDRLASLLPFPQDVINKLDKLSVLRLSVSYLRAK). A DNA-binding region spans residues 37–65 (RHRDRLNTELDRLASLLPFPQDVINKLDK). Required for maintaining the overall integrity of the AHR:ARNT heterodimer and its transcriptional activity stretches follow at residues 49–81 (LASL…AKSF), 116–124 (LLQALNGFV), and 260–262 (FAI). The Nuclear export signal motif lies at 63-71 (LDKLSVLRL). The 65-residue stretch at 111-175 (QEGEFLLQAL…AEFQRQLHWA (65 aa)) folds into the PAS 1 domain. In terms of domain architecture, PAS 2 spans 266-336 (LQPPSILEIR…CAESHIRMIK (71 aa)). One can recognise a PAC domain in the interval 342–383 (MTVFRLLAKHSRWRWVQSNARLIYRNGRPDYIIATQRPLTDE). Residues 421–449 (LPIRTKSNTSRKDWAPQSTPSKDSFHPSS) form a disordered region. Residues 436–449 (PQSTPSKDSFHPSS) are compositionally biased toward polar residues.

Homodimer. Heterodimer; efficient DNA binding requires dimerization with another bHLH protein. Interacts with ARNT; the heterodimer ARNT:AHR binds to core DNA sequence 5'-TGCGTG-3' within the dioxin response element (DRE) of target gene promoters and activates their transcription. Binds MYBBP1A. Interacts with coactivators including SRC-1, RIP140 and NOCA7, and with the corepressor SMRT. Interacts with NEDD8 and IVNS1ABP. Interacts with BMAL1. Interacts with HSP90AB1. Interacts with TIPARP; leading to mono-ADP-ribosylation of AHR and subsequent inhibition of AHR. In terms of processing, mono-ADP-ribosylated, leading to inhibit transcription activator activity of AHR.

The protein localises to the cytoplasm. Its subcellular location is the nucleus. Its function is as follows. Ligand-activated transcription factor that enables cells to adapt to changing conditions by sensing compounds from the environment, diet, microbiome and cellular metabolism, and which plays important roles in development, immunity and cancer. Upon ligand binding, translocates into the nucleus, where it heterodimerizes with ARNT and induces transcription by binding to xenobiotic response elements (XRE). Regulates a variety of biological processes, including angiogenesis, hematopoiesis, drug and lipid metabolism, cell motility and immune modulation. Xenobiotics can act as ligands: upon xenobiotic-binding, activates the expression of multiple phase I and II xenobiotic chemical metabolizing enzyme genes (such as the CYP1A1 gene). Mediates biochemical and toxic effects of halogenated aromatic hydrocarbons. Next to xenobiotics, natural ligands derived from plants, microbiota, and endogenous metabolism are potent AHR agonists. Tryptophan (Trp) derivatives constitute an important class of endogenous AHR ligands. Acts as a negative regulator of anti-tumor immunity: indoles and kynurenic acid generated by Trp catabolism act as ligand and activate AHR, thereby promoting AHR-driven cancer cell motility and suppressing adaptive immunity. Regulates the circadian clock by inhibiting the basal and circadian expression of the core circadian component PER1. Inhibits PER1 by repressing the CLOCK-BMAL1 heterodimer mediated transcriptional activation of PER1. The heterodimer ARNT:AHR binds to core DNA sequence 5'-TGCGTG-3' within the dioxin response element (DRE) of target gene promoters and activates their transcription. The sequence is that of Aryl hydrocarbon receptor (Ahr) from Mus musculus molossinus (Japanese house mouse).